A 176-amino-acid chain; its full sequence is O-acetyl-ADP-ribose deacetylase (176 aa).

Positions 1 to 175 constitute a Macro domain; the sequence is MSGRINVVQG…LYQRLLGQYD (175 aa). Substrate-binding positions include 11–12, Asn-25, 33–35, and 122–126; these read DI, GVD, and STGIY. Asp-35 acts as the Proton acceptor in catalysis.

It belongs to the MacroD-type family. YmdB subfamily. As to quaternary structure, homodimer. Interacts with RNase III.

It catalyses the reaction 3''-O-acetyl-ADP-D-ribose + H2O = ADP-D-ribose + acetate + H(+). The catalysed reaction is 2''-O-acetyl-ADP-D-ribose + H2O = ADP-D-ribose + acetate + H(+). In terms of biological role, deacetylates O-acetyl-ADP ribose to yield ADP-ribose and free acetate. Down-regulates ribonuclease 3 (RNase III) activity. Acts by interacting directly with the region of the ribonuclease that is required for dimerization/activation. In Cronobacter turicensis (strain DSM 18703 / CCUG 55852 / LMG 23827 / z3032), this protein is O-acetyl-ADP-ribose deacetylase.